Reading from the N-terminus, the 1337-residue chain is DNA-directed RNA polymerase subunit beta' (1337 aa).

Zn(2+) contacts are provided by Cys-60, Cys-62, Cys-75, and Cys-78. Positions 536, 538, and 540 each coordinate Mg(2+). Zn(2+)-binding residues include Cys-895, Cys-974, Cys-981, and Cys-984.

It belongs to the RNA polymerase beta' chain family. The RNAP catalytic core consists of 2 alpha, 1 beta, 1 beta' and 1 omega subunit. When a sigma factor is associated with the core the holoenzyme is formed, which can initiate transcription. The cofactor is Mg(2+). Zn(2+) is required as a cofactor.

It carries out the reaction RNA(n) + a ribonucleoside 5'-triphosphate = RNA(n+1) + diphosphate. Functionally, DNA-dependent RNA polymerase catalyzes the transcription of DNA into RNA using the four ribonucleoside triphosphates as substrates. In Bifidobacterium adolescentis (strain ATCC 15703 / DSM 20083 / NCTC 11814 / E194a), this protein is DNA-directed RNA polymerase subunit beta'.